The primary structure comprises 4473 residues: Plectin (4473 aa).

2 Calponin-homology (CH) domains span residues 1 to 74 and 87 to 192; these read DGHN…LHFQ and MTAK…DAMP. Residues 1-192 are actin-binding; that stretch reads DGHNLISLLE…YVSSLYDAMP (192 aa). Positions 1–1259 are globular 1; sequence DGHNLISLLE…SELTTLTSQY (1259 aa). The Spectrin 1 repeat unit spans residues 449-508; that stretch reads RYLQDLLAWVEENQRRIDSAEWGVDLPSVEAQLGSHRGMHQSIEEFRAKIERARNDESQL. Ser-509 carries the phosphoserine modification. Spectrin repeat units follow at residues 529–613 and 626–719; these read KLLN…REDH and LQTQ…AIVQ. Thr-604 carries the phosphothreonine modification. The SH3 domain occupies 730–787; it reads RGHVPLMAVCDYKQVEVTVHKGDQCQLVGPAQPSHWKVLRGPSSEAAVPSVCFLVPPP. Ser-836 is modified (phosphoserine). One copy of the Spectrin 4 repeat lies at 1104 to 1204; it reads RERVNQLLER…QKFAKQYINA (101 aa). A Phosphoserine modification is found at Ser-1224. Residues 1258 to 2548 are a coiled coil; it reads QYIKFISETL…EEIAATQAAA (1291 aa). The interval 1260-2544 is central fibrous rod domain; sequence IKFISETLRR…LAHSEEIAAT (1285 aa). Disordered stretches follow at residues 1274–1293 and 1407–1434; these read ERLA…EGEA and RAEE…DESQ. Ser-1510 carries the phosphoserine modification. The residue at position 1514 (Lys-1514) is an N6-acetyllysine. Disordered stretches follow at residues 1529–1550, 1582–1616, 1881–1929, 1950–1971, and 2003–2098; these read VTQL…ERAR, SLAQ…RELA, AEDT…AARQ, LRER…AAQK, and ERLR…KHKK. Basic and acidic residues-rich tracts occupy residues 1587–1616, 1881–1897, and 1905–1917; these read DAEK…RELA, AEDT…EAAR, and EEQR…ERVQ. Low complexity predominate over residues 1959–1968; that stretch reads ARQLQLAQEA. Over residues 2003-2047 the composition is skewed to basic and acidic residues; that stretch reads ERLRGEAEAARRAAEEAEEAREQAEREAAQSRKQVEEAERLKQSA. A compositionally biased stretch (low complexity) spans 2048–2061; sequence EEQAQARAQAQAAA. The span at 2062–2077 shows a compositional bias: basic and acidic residues; it reads EKLRKEAEQEAARRAQ. Ser-2420 carries the phosphoserine modification. The residue at position 2425 (Lys-2425) is an N6-acetyllysine. A disordered region spans residues 2457 to 2476; the sequence is REEQQRQQRQMEQEKQELVA. Residues 2545-4473 are globular 2; sequence QAAAAKALPN…SLGGPESAVA (1929 aa). A phosphoserine mark is found at Ser-2563 and Ser-2591. Plectin repeat units follow at residues 2615-2652, 2653-2690, 2691-2728, 2729-2766, and 2770-2804; these read RQYL…PGTA, LILL…PELH, HKLL…RDHA, IRLL…EEMS, and ADPG…PETG. Thr-2675 bears the Phosphothreonine mark. Tyr-2822 is modified (phosphotyrosine). 2 positions are modified to N6-acetyllysine: Lys-2842 and Lys-2880. Plectin repeat units follow at residues 2905–2942, 2943–2980, 2981–3018, 3019–3056, and 3057–3094; these read ALVP…ADSV, RRAL…PDVA, VALL…PELH, EKLL…REQG, and LRLL…KETN. Tyr-3151 is modified (phosphotyrosine). The residue at position 3209 (Lys-3209) is an N6-acetyllysine. Plectin repeat units lie at residues 3274–3311, 3312–3349, 3350–3387, 3388–3425, and 3429–3463; these read RTLL…PSTA, TLLL…PELH, EKLL…REHA, IRLL…EEMS, and ADPS…PETG. Thr-3574 bears the Phosphothreonine mark. Position 3579 is a phosphotyrosine (Tyr-3579). Plectin repeat units lie at residues 3609-3646, 3647-3684, 3685-3722, 3723-3760, 3764-3797, and 3800-3834; these read WRYL…AEVA, RLLL…PELH, DRLL…AEEA, LRLL…KDTH, SEPS…DGSG, and LLPL…EATA. Position 3819 is a phosphothreonine (Thr-3819). Residue Ser-3843 is modified to Phosphoserine. Plectin repeat units lie at residues 3852–3889, 3890–3927, 3928–3965, 3966–4003, 4007–4041, and 4043–4094; these read QKFL…PGTA, FELL…PEFK, DRLL…KDHG, IRLL…EEMN, TDPS…PQTG, and RLLP…HQTY. Residues 4039–4089 form a binding to intermediate filaments region; the sequence is QTGLRLLPLKEKKRERKTSSKSSVRKRRVVIVDPETSKEMSVYEAYRKGLI. Ser-4171, Ser-4173, Ser-4174, Ser-4175, Ser-4178, Ser-4179, Ser-4180, and Ser-4181 each carry phosphoserine. Tyr-4182 is subject to Phosphotyrosine. 3 positions are modified to phosphoserine: Ser-4185, Ser-4189, and Ser-4195. 5 Plectin repeats span residues 4197 to 4234, 4235 to 4272, 4273 to 4310, 4311 to 4348, and 4349 to 4386; these read SDPT…NITG, QRLL…KIMV, DRIN…YEAG, QRFL…ARTA, and QKLR…EGTG. Thr-4200 is subject to Phosphothreonine. A Phosphothreonine; by CDK1 modification is found at Thr-4328. Residues Ser-4396 and Ser-4402 each carry the phosphoserine modification. A compositionally biased stretch (low complexity) spans 4400 to 4460; sequence YYSPYSVSGS…SGYGRRYASG (61 aa). The tract at residues 4400–4473 is disordered; the sequence is YYSPYSVSGS…SLGGPESAVA (74 aa). Tyr-4404 carries the post-translational modification Phosphotyrosine. Phosphoserine is present on residues Ser-4405, Ser-4407, and Ser-4411. Residue Thr-4412 is modified to Phosphothreonine. Positions 4414–4429 are 4 X 4 AA tandem repeats of G-S-R-X; it reads GSRTGSRTGSRAGSRR. At Ser-4415 the chain carries Phosphoserine. An omega-N-methylarginine mark is found at Arg-4416 and Arg-4429. Residues Ser-4431 and Ser-4464 each carry the phosphoserine modification.

It belongs to the plakin or cytolinker family. As to quaternary structure, homodimer or homotetramer. Interacts (via actin-binding domain) with SYNE3. Interacts (via calponin-homology (CH) 1 domain) with VIM (via rod region). Interacts (via N-terminus) with DST isoform 2 (via N-terminus). Interacts with FER. Interacts with TOR1A. Interacts with ANK3. Identified in complexes that contain VIM, EZR, AHNAK, BFSP1, BFSP2, ANK2, PLEC, PRX and spectrin. Post-translationally, phosphorylated by CDK1; regulates dissociation from intermediate filaments during mitosis.

It localises to the cytoplasm. It is found in the cytoskeleton. The protein resides in the cell junction. Its subcellular location is the hemidesmosome. The protein localises to the cell projection. It localises to the podosome. In terms of biological role, interlinks intermediate filaments with microtubules and microfilaments and anchors intermediate filaments to desmosomes or hemidesmosomes. May be involved not only in the cross-linking and stabilization of cytoskeletal intermediate filaments network, but also in the regulation of their dynamics. The sequence is that of Plectin (PLEC) from Cricetulus griseus (Chinese hamster).